The following is a 199-amino-acid chain: UPF0056 membrane protein bbp_399 (199 aa).

Helical transmembrane passes span 7-29 (VTILLILIMDPLGNLPIFMSILK), 39-58 (ILIREMMIALLIMLLFLFAG), 71-93 (TVSVSGGIILFLIAIKMIFPTYE), 108-130 (FLVPLAIPLVAGPSLLATLMLLS), 137-156 (ILYLIGSLLIAWMITVVILL), and 176-198 (LMGLILIMLSTQMFLDGIKSWFY).

The protein belongs to the UPF0056 (MarC) family.

Its subcellular location is the cell membrane. This chain is UPF0056 membrane protein bbp_399, found in Buchnera aphidicola subsp. Baizongia pistaciae (strain Bp).